Consider the following 541-residue polypeptide: Putative transferase YhbX (541 aa).

At 1–60 (MTVFNKFARTFKSHWLLYLCVIVFGITNLVASSGAHMVQRLLFFVLTILVVKRISSLPLR) the chain is on the periplasmic side. Residues 61-81 (LLVAAPFVLLTAADMSISLYS) form a helical membrane-spanning segment. Residues 82 to 110 (WCTFGTTFNDGFAISVLQSDPDEVVKMLG) lie on the Cytoplasmic side of the membrane. The helical transmembrane segment at 111-131 (MYIPYLCAFAFLSLLFLAVII) threads the bilayer. The Periplasmic portion of the chain corresponds to 132–141 (KYDVSLPTKK). Residues 142–162 (VTGILLLIVISGSLFSACQFA) form a helical membrane-spanning segment. At 163–264 (YKDAKNKKAF…RKQIKLFNQA (102 aa)) the chain is on the cytoplasmic side. Residues 265-285 (ISGAPYTALSVPLSLTADSVL) form a helical membrane-spanning segment. At 286–541 (SHDIHNYPDN…QGNPTPEGQG (256 aa)) the chain is on the periplasmic side.

The protein belongs to the phosphoethanolamine transferase family.

It localises to the cell inner membrane. Its function is as follows. Probably does not transfer phosphoethanolamine to lipid A. The chain is Putative transferase YhbX (yhbX) from Escherichia coli (strain K12).